The following is a 395-amino-acid chain: MLRWITAGESHGPALVAMLEGMVAGVEVTSEDISTQLARRRLGYGRGARMKFEADKVTIVGGVRHGRTLGGPIAVEVGNTEWPKWETIMSADPVDADLLADQARNAPLTRPRPGHADYSGMLKYGFDDARPVLERASARETAARVAAATFARGFLRQVFGVEVLSHVISIGASDPYAGPEPTASDLAAIDASPVRAFDKAAEESMIAEIEAAKRDGDTLGGIVEVVIHGLPVGLGSFISGADRLDARLASALMGIQAIKGVEVGDGFETARRRGSQAHDEMRPGPDGILRSTNRAGGLEGGMTNGEALRVRAAMKPISTVPRALATVDMSTGEEAVAIHQRSDVCAVPAAGVVAEAMVALVVAQAALEKFGGDSVAETAANYERYASGVAARLAR.

Arginine 40 and arginine 46 together coordinate NADP(+). FMN-binding positions include 135–137 and 256–257; these read RAS and QA. Residues 272-283 show a composition bias toward basic and acidic residues; sequence RRGSQAHDEMRP. The tract at residues 272 to 296 is disordered; sequence RRGSQAHDEMRPGPDGILRSTNRAG. FMN contacts are provided by residues glycine 300, 315–319, and arginine 341; that span reads KPIST.

This sequence belongs to the chorismate synthase family. Homotetramer. FMNH2 serves as cofactor.

It carries out the reaction 5-O-(1-carboxyvinyl)-3-phosphoshikimate = chorismate + phosphate. The protein operates within metabolic intermediate biosynthesis; chorismate biosynthesis; chorismate from D-erythrose 4-phosphate and phosphoenolpyruvate: step 7/7. In terms of biological role, catalyzes the anti-1,4-elimination of the C-3 phosphate and the C-6 proR hydrogen from 5-enolpyruvylshikimate-3-phosphate (EPSP) to yield chorismate, which is the branch point compound that serves as the starting substrate for the three terminal pathways of aromatic amino acid biosynthesis. This reaction introduces a second double bond into the aromatic ring system. This is Chorismate synthase from Rhodococcus opacus (strain B4).